Here is a 212-residue protein sequence, read N- to C-terminus: MPGGRRRVGSMNIAGFWILAQFVLLLVANVKSSADSELCGPRGARGPPGLSGLPGPPGYTGPIGMPGLTGRPGLPGLVEKCPPLPQSAFSVKLSGPFPGPSQPIVFQEVLYNHQGHFDPATGVFNCSVPGVYHFGFDIELFQSAVKVGLMRNGIQIRDKRAEAGDSHEQASGSSVLELEKGDRVWLESKLDREESEKGTTHAVFYGFLLNGN.

The first 34 residues, 1–34 (MPGGRRRVGSMNIAGFWILAQFVLLLVANVKSSA), serve as a signal peptide directing secretion. The tract at residues 36-66 (SELCGPRGARGPPGLSGLPGPPGYTGPIGMP) is disordered. Over residues 40-53 (GPRGARGPPGLSGL) the composition is skewed to low complexity. The region spanning 40 to 76 (GPRGARGPPGLSGLPGPPGYTGPIGMPGLTGRPGLPG) is the Collagen-like domain. Residues 82 to 212 (PPLPQSAFSV…VFYGFLLNGN (131 aa)) form the C1q domain. N125 is a glycosylation site (N-linked (GlcNAc...) asparagine).

The protein localises to the secreted. The protein is Protein HP-25 homolog 1 of Bos taurus (Bovine).